The primary structure comprises 831 residues: Prickle-like protein 1 (831 aa).

One can recognise a PET domain in the interval 14–122 (FGCQRSSTSD…TIKLLSRAVM (109 aa)). 3 LIM zinc-binding domains span residues 124 to 189 (AVCE…LLKP), 189 to 249 (PRCS…LYAE), and 249 to 313 (EYCE…EDVH). Positions 313–342 (HASDSSDSAFQSARSRDSRRSVRMGKSSRS) are disordered. A phosphoserine mark is found at S315, S591, and S594. Disordered regions lie at residues 663–688 (FEER…NALN) and 763–831 (CSSS…CIIS). The segment covering 669 to 680 (RSHHHRRRRSRK) has biased composition (basic residues). Residue S683 is modified to Phosphoserine. The span at 815-831 (TKSKKKKGHKGKNCIIS) shows a compositional bias: basic residues. C828 carries the cysteine methyl ester modification. C828 carries S-farnesyl cysteine lipidation. Residues 829 to 831 (IIS) constitute a propeptide, removed in mature form.

This sequence belongs to the prickle / espinas / testin family. In terms of assembly, interacts with REST. Expressed at highest levels in placenta and at lower levels in lung, liver, kidney and pancreas. Expressed in thalamus, hippocampus, cerebral cortex, and cerebellum (in neurons rather than glia).

The protein resides in the nucleus membrane. It is found in the cytoplasm. Its subcellular location is the cytosol. Functionally, involved in the planar cell polarity pathway that controls convergent extension during gastrulation and neural tube closure. Convergent extension is a complex morphogenetic process during which cells elongate, move mediolaterally, and intercalate between neighboring cells, leading to convergence toward the mediolateral axis and extension along the anteroposterior axis. Necessary for nuclear localization of REST. May serve as nuclear receptor. This is Prickle-like protein 1 (PRICKLE1) from Homo sapiens (Human).